The chain runs to 292 residues: uncharacterized protein (292 aa).

Positions 1–19 (MFKKYIFILLLLVTSIVKA) are cleaved as a signal peptide. Positions 271-292 (KRNNPPLKTNNAKSKNPYDQSK) are disordered.

This is an uncharacterized protein from Rickettsia bellii (strain RML369-C).